Consider the following 173-residue polypeptide: Crossover junction endodeoxyribonuclease RuvC (173 aa).

Catalysis depends on residues Asp8, Glu68, and Asp140. Positions 8, 68, and 140 each coordinate Mg(2+).

Belongs to the RuvC family. In terms of assembly, homodimer which binds Holliday junction (HJ) DNA. The HJ becomes 2-fold symmetrical on binding to RuvC with unstacked arms; it has a different conformation from HJ DNA in complex with RuvA. In the full resolvosome a probable DNA-RuvA(4)-RuvB(12)-RuvC(2) complex forms which resolves the HJ. It depends on Mg(2+) as a cofactor.

It is found in the cytoplasm. It carries out the reaction Endonucleolytic cleavage at a junction such as a reciprocal single-stranded crossover between two homologous DNA duplexes (Holliday junction).. Functionally, the RuvA-RuvB-RuvC complex processes Holliday junction (HJ) DNA during genetic recombination and DNA repair. Endonuclease that resolves HJ intermediates. Cleaves cruciform DNA by making single-stranded nicks across the HJ at symmetrical positions within the homologous arms, yielding a 5'-phosphate and a 3'-hydroxyl group; requires a central core of homology in the junction. The consensus cleavage sequence is 5'-(A/T)TT(C/G)-3'. Cleavage occurs on the 3'-side of the TT dinucleotide at the point of strand exchange. HJ branch migration catalyzed by RuvA-RuvB allows RuvC to scan DNA until it finds its consensus sequence, where it cleaves and resolves the cruciform DNA. The chain is Crossover junction endodeoxyribonuclease RuvC from Saccharophagus degradans (strain 2-40 / ATCC 43961 / DSM 17024).